A 185-amino-acid polypeptide reads, in one-letter code: Elongation factor P (185 aa).

This sequence belongs to the elongation factor P family.

The protein resides in the cytoplasm. It participates in protein biosynthesis; polypeptide chain elongation. In terms of biological role, involved in peptide bond synthesis. Stimulates efficient translation and peptide-bond synthesis on native or reconstituted 70S ribosomes in vitro. Probably functions indirectly by altering the affinity of the ribosome for aminoacyl-tRNA, thus increasing their reactivity as acceptors for peptidyl transferase. The chain is Elongation factor P from Salinispora tropica (strain ATCC BAA-916 / DSM 44818 / JCM 13857 / NBRC 105044 / CNB-440).